The sequence spans 158 residues: Cyclic pyranopterin monophosphate synthase (158 aa).

Substrate contacts are provided by residues 76–78 (LCH) and 114–115 (ME). The active site involves Asp-129.

This sequence belongs to the MoaC family. Homohexamer; trimer of dimers.

The enzyme catalyses (8S)-3',8-cyclo-7,8-dihydroguanosine 5'-triphosphate = cyclic pyranopterin phosphate + diphosphate. The protein operates within cofactor biosynthesis; molybdopterin biosynthesis. In terms of biological role, catalyzes the conversion of (8S)-3',8-cyclo-7,8-dihydroguanosine 5'-triphosphate to cyclic pyranopterin monophosphate (cPMP). In Shewanella halifaxensis (strain HAW-EB4), this protein is Cyclic pyranopterin monophosphate synthase.